The following is a 221-amino-acid chain: Octanoyltransferase (221 aa).

Positions 35 to 221 constitute a BPL/LPL catalytic domain; sequence ESYENRIIFC…RELLAALLSK (187 aa). Substrate is bound by residues 80 to 87, 152 to 154, and 165 to 167; these read RGGDITYH, AIG, and GLA. Cys183 functions as the Acyl-thioester intermediate in the catalytic mechanism.

Belongs to the LipB family.

It is found in the cytoplasm. The catalysed reaction is octanoyl-[ACP] + L-lysyl-[protein] = N(6)-octanoyl-L-lysyl-[protein] + holo-[ACP] + H(+). It participates in protein modification; protein lipoylation via endogenous pathway; protein N(6)-(lipoyl)lysine from octanoyl-[acyl-carrier-protein]: step 1/2. Catalyzes the transfer of endogenously produced octanoic acid from octanoyl-acyl-carrier-protein onto the lipoyl domains of lipoate-dependent enzymes. Lipoyl-ACP can also act as a substrate although octanoyl-ACP is likely to be the physiological substrate. The protein is Octanoyltransferase of Bacteroides fragilis (strain YCH46).